Here is a 396-residue protein sequence, read N- to C-terminus: Protein Njmu-R1 (396 aa).

A disordered region spans residues 1 to 78 (MLPSLQESMD…SGDDFSLSLA (78 aa)). Phosphoserine occurs at positions 8 and 18. The span at 9-24 (MDGDEKELESSEEGGS) shows a compositional bias: acidic residues. Over residues 58 to 67 (GSPSGTNAET) the composition is skewed to polar residues.

In terms of assembly, component of the complex WDR11 composed of C17orf75, FAM91A1 and WDR11; FAM91A1 and WDR11 are required for proper location of the complex. Interacts with TBC1D23; this interaction may be indirect and recruits TBC1D23 to AP-1-derived vesicles. In terms of tissue distribution, highly expressed in testis and also expressed in fetal testis.

Its subcellular location is the golgi apparatus. It localises to the trans-Golgi network. It is found in the cytoplasmic vesicle. In terms of biological role, as component of the WDR11 complex acts together with TBC1D23 to facilitate the golgin-mediated capture of vesicles generated using AP-1. May have a role in spermatogenesis. This Homo sapiens (Human) protein is Protein Njmu-R1 (C17orf75).